The chain runs to 116 residues: Large ribosomal subunit protein uL18 (116 aa).

It belongs to the universal ribosomal protein uL18 family. In terms of assembly, part of the 50S ribosomal subunit; part of the 5S rRNA/L5/L18/L25 subcomplex. Contacts the 5S and 23S rRNAs.

Functionally, this is one of the proteins that bind and probably mediate the attachment of the 5S RNA into the large ribosomal subunit, where it forms part of the central protuberance. The protein is Large ribosomal subunit protein uL18 of Pseudomonas entomophila (strain L48).